The chain runs to 158 residues: SsrA-binding protein (158 aa).

Belongs to the SmpB family.

The protein resides in the cytoplasm. Its function is as follows. Required for rescue of stalled ribosomes mediated by trans-translation. Binds to transfer-messenger RNA (tmRNA), required for stable association of tmRNA with ribosomes. tmRNA and SmpB together mimic tRNA shape, replacing the anticodon stem-loop with SmpB. tmRNA is encoded by the ssrA gene; the 2 termini fold to resemble tRNA(Ala) and it encodes a 'tag peptide', a short internal open reading frame. During trans-translation Ala-aminoacylated tmRNA acts like a tRNA, entering the A-site of stalled ribosomes, displacing the stalled mRNA. The ribosome then switches to translate the ORF on the tmRNA; the nascent peptide is terminated with the 'tag peptide' encoded by the tmRNA and targeted for degradation. The ribosome is freed to recommence translation, which seems to be the essential function of trans-translation. This Saccharopolyspora erythraea (strain ATCC 11635 / DSM 40517 / JCM 4748 / NBRC 13426 / NCIMB 8594 / NRRL 2338) protein is SsrA-binding protein.